The chain runs to 456 residues: MFS-type transporter SLC18B1 (456 aa).

Met-1 bears the N-acetylmethionine mark. Positions 1 to 24 are disordered; that stretch reads MEALGDLEGPRAPGGDDPAGSAGE. At 1-33 the chain is on the cytoplasmic side; it reads MEALGDLEGPRAPGGDDPAGSAGETPGWLSREQ. Residues 10 to 23 show a composition bias toward low complexity; it reads PRAPGGDDPAGSAG. Ser-21 is modified (phosphoserine). A helical membrane pass occupies residues 34-54; that stretch reads VFVLISAASVNLGSMMCYSIL. Residues 55–70 are Extracellular-facing; sequence GPFFPKEAEKKGASNT. A helical transmembrane segment spans residues 71-91; sequence IIGMIFGCFALFELLASLVFG. Over 92 to 100 the chain is Cytoplasmic; that stretch reads NYLVHIGAK. The helical transmembrane segment at 101-121 threads the bilayer; that stretch reads FMFVAGMFVSGGVTILFGVLD. The Extracellular segment spans residues 122-127; the sequence is RVPDGP. The chain crosses the membrane as a helical span at residues 128–148; that stretch reads VFIAMCFLVRVMDAVSFAAAM. Topologically, residues 149–161 are cytoplasmic; that stretch reads TASSSILAKAFPN. A helical transmembrane segment spans residues 162-184; the sequence is NVATVLGSLETFSGLGLILGPPV. Topologically, residues 185–195 are extracellular; it reads GGFLYQSFGYE. Residues 196–216 traverse the membrane as a helical segment; sequence VPFIVLGCVVLLMVPLNMYIL. The Cytoplasmic segment spans residues 217–230; sequence PNYESDPGEHSFWK. Residues 231–251 traverse the membrane as a helical segment; it reads LIALPKVGLIAFVINSLSSCF. The Extracellular portion of the chain corresponds to 252–272; the sequence is GFLDPTLSLFVLEKFNLPAGY. A helical membrane pass occupies residues 273 to 293; that stretch reads VGLVFLGMALSYAISSPLFGL. Over 294 to 304 the chain is Cytoplasmic; it reads LSDKRPPLRKW. The chain crosses the membrane as a helical span at residues 305 to 325; that stretch reads LLVFGNLITAGCYMLLGPVPI. The Extracellular portion of the chain corresponds to 326-331; it reads LHIKSQ. A helical membrane pass occupies residues 332–352; it reads LWLLVLILVVSGLSAGMSIIP. Residues 353–377 lie on the Cytoplasmic side of the membrane; that stretch reads TFPEILSCAHENGFEEGLSTLGLVS. A helical membrane pass occupies residues 378 to 398; it reads GLFSAMWSIGAFMGPTLGGFL. The Extracellular portion of the chain corresponds to 399 to 407; that stretch reads YEKIGFEWA. The chain crosses the membrane as a helical span at residues 408-428; it reads AAIQGLWALISGLAMGLFYLL. Residues 429 to 456 lie on the Cytoplasmic side of the membrane; the sequence is EYSRRKRSKSQNILSTEEERTTLLPNET. The residue at position 438 (Ser-438) is a Phosphoserine.

The protein belongs to the major facilitator superfamily. As to expression, expressed in various tissues including lung, placenta, adrenal gland, liver, testis, and brain.

The protein localises to the cytoplasmic vesicle. Its subcellular location is the secretory vesicle membrane. It is found in the secretory vesicle. The protein resides in the synaptic vesicle membrane. It carries out the reaction spermine(in) + n H(+)(out) = spermine(out) + n H(+)(in). The enzyme catalyses spermidine(in) + n H(+)(out) = spermidine(out) + n H(+)(in). It catalyses the reaction serotonin(in) + n H(+)(out) = serotonin(out) + n H(+)(in). Functionally, proton-coupled polyamine antiporter involved in the translocation of polyamines from cytosol into secretory vesicles prior to their release via exocytosis. Uses the electrochemical proton gradient generated by a V-type proton-pumping ATPase to couple the efflux of protons with the uptake of a polyamine molecule. Facilitates vesicular storage of spermine and spermidine in astrocytes with an impact on glutamatergic neuronal transmission and memory formation. Upon antigen stimulation, regulates polyamine accumulation and release in mast cell secretory granules, which in turn potentiates mast cell degranulation and histamine secretion. This Homo sapiens (Human) protein is MFS-type transporter SLC18B1.